The sequence spans 247 residues: Carboxy-S-adenosyl-L-methionine synthase (247 aa).

Residues Tyr39, 64 to 66, 89 to 90, 117 to 118, Asn132, and Arg199 contribute to the S-adenosyl-L-methionine site; these read GCS, DN, and DI.

It belongs to the class I-like SAM-binding methyltransferase superfamily. Cx-SAM synthase family. As to quaternary structure, homodimer.

The enzyme catalyses prephenate + S-adenosyl-L-methionine = carboxy-S-adenosyl-L-methionine + 3-phenylpyruvate + H2O. In terms of biological role, catalyzes the conversion of S-adenosyl-L-methionine (SAM) to carboxy-S-adenosyl-L-methionine (Cx-SAM). The sequence is that of Carboxy-S-adenosyl-L-methionine synthase from Salmonella arizonae (strain ATCC BAA-731 / CDC346-86 / RSK2980).